The following is an 81-amino-acid chain: Photosystem I iron-sulfur center (81 aa).

4Fe-4S ferredoxin-type domains lie at 2-31 (AHAVKIYDTCIGCTQCVRACPTDVLEMIPW) and 39-68 (IASAPRTEDCVGCKRCESRCPTDFLSVRVY). [4Fe-4S] cluster contacts are provided by cysteine 11, cysteine 14, cysteine 17, cysteine 21, cysteine 48, cysteine 51, cysteine 54, and cysteine 58.

The eukaryotic PSI reaction center is composed of at least 11 subunits. [4Fe-4S] cluster serves as cofactor.

The protein resides in the plastid. It localises to the chloroplast thylakoid membrane. The catalysed reaction is reduced [plastocyanin] + hnu + oxidized [2Fe-2S]-[ferredoxin] = oxidized [plastocyanin] + reduced [2Fe-2S]-[ferredoxin]. Apoprotein for the two 4Fe-4S centers FA and FB of photosystem I (PSI); essential for photochemical activity. FB is the terminal electron acceptor of PSI, donating electrons to ferredoxin. The C-terminus interacts with PsaA/B/D and helps assemble the protein into the PSI complex. Required for binding of PsaD and PsaE to PSI. PSI is a plastocyanin-ferredoxin oxidoreductase, converting photonic excitation into a charge separation, which transfers an electron from the donor P700 chlorophyll pair to the spectroscopically characterized acceptors A0, A1, FX, FA and FB in turn. In Marchantia polymorpha (Common liverwort), this protein is Photosystem I iron-sulfur center.